Reading from the N-terminus, the 177-residue chain is Large ribosomal subunit protein uL6 (177 aa).

This sequence belongs to the universal ribosomal protein uL6 family. As to quaternary structure, part of the 50S ribosomal subunit.

Its function is as follows. This protein binds to the 23S rRNA, and is important in its secondary structure. It is located near the subunit interface in the base of the L7/L12 stalk, and near the tRNA binding site of the peptidyltransferase center. In Herminiimonas arsenicoxydans, this protein is Large ribosomal subunit protein uL6.